A 969-amino-acid chain; its full sequence is RNA polymerase-associated protein RapA (969 aa).

Positions 164 to 334 (EVGRRHAPRV…FARLRLLDPD (171 aa)) constitute a Helicase ATP-binding domain. 177–184 (DEVGLGKT) is a binding site for ATP. A DEAH box motif is present at residues 280–283 (DEAH). In terms of domain architecture, Helicase C-terminal spans 492–686 (RVNWLLEKVK…ELKSQLEQGR (195 aa)).

The protein belongs to the SNF2/RAD54 helicase family. RapA subfamily. As to quaternary structure, interacts with the RNAP. Has a higher affinity for the core RNAP than for the holoenzyme. Its ATPase activity is stimulated by binding to RNAP.

In terms of biological role, transcription regulator that activates transcription by stimulating RNA polymerase (RNAP) recycling in case of stress conditions such as supercoiled DNA or high salt concentrations. Probably acts by releasing the RNAP, when it is trapped or immobilized on tightly supercoiled DNA. Does not activate transcription on linear DNA. Probably not involved in DNA repair. The chain is RNA polymerase-associated protein RapA from Vibrio parahaemolyticus serotype O3:K6 (strain RIMD 2210633).